The following is a 351-amino-acid chain: Glycerol-1-phosphate dehydrogenase [NAD(P)+] (351 aa).

Residues 97–101 (GKTID) and 119–122 (TAPS) contribute to the NAD(+) site. Aspartate 124 contacts substrate. Serine 128 contacts NAD(+). Residue aspartate 171 coordinates substrate. The Zn(2+) site is built by aspartate 171 and histidine 251. Residue histidine 255 coordinates substrate. Histidine 267 is a Zn(2+) binding site.

The protein belongs to the glycerol-1-phosphate dehydrogenase family. Homodimer. It depends on Zn(2+) as a cofactor.

Its subcellular location is the cytoplasm. The catalysed reaction is sn-glycerol 1-phosphate + NAD(+) = dihydroxyacetone phosphate + NADH + H(+). It catalyses the reaction sn-glycerol 1-phosphate + NADP(+) = dihydroxyacetone phosphate + NADPH + H(+). The protein operates within membrane lipid metabolism; glycerophospholipid metabolism. Functionally, catalyzes the NAD(P)H-dependent reduction of dihydroxyacetonephosphate (DHAP or glycerone phosphate) to glycerol 1-phosphate (G1P). The G1P thus generated is used as the glycerophosphate backbone of phospholipids in the cellular membranes of Archaea. The protein is Glycerol-1-phosphate dehydrogenase [NAD(P)+] of Metallosphaera sedula (strain ATCC 51363 / DSM 5348 / JCM 9185 / NBRC 15509 / TH2).